A 98-amino-acid chain; its full sequence is uncharacterized protein (98 aa).

A run of 2 helical transmembrane segments spans residues 14–34 and 41–61; these read FLVI…PVTA and MTGA…ASII.

It localises to the cell membrane. This is an uncharacterized protein from Haemophilus influenzae (strain ATCC 51907 / DSM 11121 / KW20 / Rd).